The following is a 973-amino-acid chain: E3 ubiquitin-protein ligase MIB2 (973 aa).

The MIB/HERC2 1 domain occupies 1 to 80 (MDLDPHAGVQ…AHDLLLYDNA (80 aa)). The ZZ-type zinc finger occupies 86-138 (HPNIICDCCKKHGLRGMRWKCRVCFDYDLCTQCYMHNKHDLTHAFERYETSHS). The Zn(2+) site is built by Cys91, Cys94, Cys106, Cys109, Cys115, Cys118, His124, and His128. An MIB/HERC2 2 domain is found at 149–227 (LPRIPLRGIF…KVDLRCVGEA (79 aa)). Ser251 is subject to Phosphoserine. 9 ANK repeats span residues 480 to 509 (QGRT…SMDL), 513 to 542 (EGNT…AVDA), 546 to 575 (TRST…DVNL), 579 to 611 (HADT…DVTA), 615 to 644 (QGFT…QLVD), 649 to 679 (DGFT…DVNV), 683 to 712 (KLQS…SVNT), 716 to 744 (EGDT…DPGP), and 785 to 814 (RGRS…ERQA). 2 RING-type zinc fingers span residues 850-885 (CLVC…IRCQ) and 929-962 (CPIC…PICR).

Interacts with actin monomer. Post-translationally, ubiquitinated. Possibly via autoubiquitination. In terms of tissue distribution, highly expressed in brain, heart, liver and kidney.

The protein resides in the cytoplasm. The protein localises to the endosome. It catalyses the reaction S-ubiquitinyl-[E2 ubiquitin-conjugating enzyme]-L-cysteine + [acceptor protein]-L-lysine = [E2 ubiquitin-conjugating enzyme]-L-cysteine + N(6)-ubiquitinyl-[acceptor protein]-L-lysine.. Its pathway is protein modification; protein ubiquitination. Its function is as follows. E3 ubiquitin-protein ligase that mediates ubiquitination of Delta receptors, which act as ligands of Notch proteins. Positively regulates the Delta-mediated Notch signaling by ubiquitinating the intracellular domain of Delta, leading to endocytosis of Delta receptors. This chain is E3 ubiquitin-protein ligase MIB2 (Mib2), found in Mus musculus (Mouse).